Consider the following 118-residue polypeptide: Large ribosomal subunit protein bL20 (118 aa).

Belongs to the bacterial ribosomal protein bL20 family.

Binds directly to 23S ribosomal RNA and is necessary for the in vitro assembly process of the 50S ribosomal subunit. It is not involved in the protein synthesizing functions of that subunit. The protein is Large ribosomal subunit protein bL20 of Francisella tularensis subsp. tularensis (strain WY96-3418).